The primary structure comprises 562 residues: NAD-dependent malic enzyme (562 aa).

The active-site Proton donor is the Tyr101. Arg154 is an NAD(+) binding site. Lys172 acts as the Proton acceptor in catalysis. Positions 243, 244, and 267 each coordinate a divalent metal cation. Residues Asp267 and Asn415 each contribute to the NAD(+) site.

Belongs to the malic enzymes family. Homotetramer. Requires Mg(2+) as cofactor. The cofactor is Mn(2+).

The catalysed reaction is (S)-malate + NAD(+) = pyruvate + CO2 + NADH. It carries out the reaction oxaloacetate + H(+) = pyruvate + CO2. The chain is NAD-dependent malic enzyme from Shewanella denitrificans (strain OS217 / ATCC BAA-1090 / DSM 15013).